The following is a 449-amino-acid chain: Sensor protein QseC (449 aa).

Residues 1-12 (MKLTQRLSLRVR) are Cytoplasmic-facing. A helical transmembrane segment spans residues 13 to 33 (LTLIFLILVSITWAISSFVAW). At 34–161 (RKTTDNVDEL…REDMALAIVA (128 aa)) the chain is on the periplasmic side. The chain crosses the membrane as a helical span at residues 162-182 (AQLTPWLIALPFMLLILLLLL). The 53-residue stretch at 183–235 (HRELRPLKKLAQALRFRSPESETPLDAKGVPSEVRPLVEALNQLFSRIHSMMV) folds into the HAMP domain. Topologically, residues 183–449 (HRELRPLKKL…EGGFEAVVSW (267 aa)) are cytoplasmic. Positions 243–449 (DAAHELRSPL…EGGFEAVVSW (207 aa)) constitute a Histidine kinase domain. Histidine 246 is subject to Phosphohistidine; by autocatalysis.

It localises to the cell inner membrane. It catalyses the reaction ATP + protein L-histidine = ADP + protein N-phospho-L-histidine.. Functionally, member of a two-component regulatory system QseB/QseC. Activates the flagella regulon by activating transcription of FlhDC. May activate QseB by phosphorylation. The polypeptide is Sensor protein QseC (qseC) (Salmonella typhimurium (strain LT2 / SGSC1412 / ATCC 700720)).